The chain runs to 217 residues: Large ribosomal subunit protein uL3 (217 aa).

The interval 134–154 (DATHGNSLSHRAPGSIGQCQT) is disordered. Gln153 bears the N5-methylglutamine mark.

Belongs to the universal ribosomal protein uL3 family. In terms of assembly, part of the 50S ribosomal subunit. Forms a cluster with proteins L14 and L19. In terms of processing, methylated by PrmB.

One of the primary rRNA binding proteins, it binds directly near the 3'-end of the 23S rRNA, where it nucleates assembly of the 50S subunit. This is Large ribosomal subunit protein uL3 from Coxiella burnetii (strain Dugway 5J108-111).